The chain runs to 104 residues: ATP synthase subunit c (104 aa).

The next 2 membrane-spanning stretches (helical) occupy residues L37–V57 and A83–V103.

Belongs to the ATPase C chain family. As to quaternary structure, F-type ATPases have 2 components, F(1) - the catalytic core - and F(0) - the membrane proton channel. F(1) has five subunits: alpha(3), beta(3), gamma(1), delta(1), epsilon(1). F(0) has three main subunits: a(1), b(2) and c(10-14). The alpha and beta chains form an alternating ring which encloses part of the gamma chain. F(1) is attached to F(0) by a central stalk formed by the gamma and epsilon chains, while a peripheral stalk is formed by the delta and b chains.

Its subcellular location is the cell membrane. Functionally, f(1)F(0) ATP synthase produces ATP from ADP in the presence of a proton or sodium gradient. F-type ATPases consist of two structural domains, F(1) containing the extramembraneous catalytic core and F(0) containing the membrane proton channel, linked together by a central stalk and a peripheral stalk. During catalysis, ATP synthesis in the catalytic domain of F(1) is coupled via a rotary mechanism of the central stalk subunits to proton translocation. Its function is as follows. Key component of the F(0) channel; it plays a direct role in translocation across the membrane. A homomeric c-ring of between 10-14 subunits forms the central stalk rotor element with the F(1) delta and epsilon subunits. In Mesoplasma florum (strain ATCC 33453 / NBRC 100688 / NCTC 11704 / L1) (Acholeplasma florum), this protein is ATP synthase subunit c.